Reading from the N-terminus, the 334-residue chain is Cytochrome c551 peroxidase (334 aa).

A signal peptide spans 1–26; it reads MIKRTLTVSLLSLSLGAMFASAGVMA. Heme c contacts are provided by Cys-65, Cys-68, His-69, Cys-209, Cys-212, His-213, His-270, and Met-284. A disordered region spans residues 315-334; that stretch reads FKLPILPPSNNDTPRSQPYE. Over residues 322–334 the composition is skewed to polar residues; the sequence is PSNNDTPRSQPYE.

In terms of processing, binds 2 heme c groups covalently per subunit.

Its subcellular location is the periplasm. It catalyses the reaction 2 Fe(II)-[cytochrome c] + H2O2 + 2 H(+) = 2 Fe(III)-[cytochrome c] + 2 H2O. In Nitrosomonas europaea (strain ATCC 19718 / CIP 103999 / KCTC 2705 / NBRC 14298), this protein is Cytochrome c551 peroxidase (ccp).